The following is a 205-amino-acid chain: Large ribosomal subunit protein uL4 (205 aa).

Belongs to the universal ribosomal protein uL4 family. As to quaternary structure, part of the 50S ribosomal subunit.

Functionally, one of the primary rRNA binding proteins, this protein initially binds near the 5'-end of the 23S rRNA. It is important during the early stages of 50S assembly. It makes multiple contacts with different domains of the 23S rRNA in the assembled 50S subunit and ribosome. Its function is as follows. Forms part of the polypeptide exit tunnel. In Roseobacter denitrificans (strain ATCC 33942 / OCh 114) (Erythrobacter sp. (strain OCh 114)), this protein is Large ribosomal subunit protein uL4.